The primary structure comprises 231 residues: UPF0758 protein aq_1610 (231 aa).

In terms of domain architecture, MPN spans 110-231 (SIRNPQEAFE…YFSFREEGVL (122 aa)). 3 residues coordinate Zn(2+): His180, His182, and Asp193. Residues 180-193 (HNHPQGEPSPSNED) carry the JAMM motif motif.

It belongs to the UPF0758 family.

This chain is UPF0758 protein aq_1610, found in Aquifex aeolicus (strain VF5).